The following is a 506-amino-acid chain: Galactose/methyl galactoside import ATP-binding protein MglA (506 aa).

2 consecutive ABC transporter domains span residues 14 to 249 (LEMS…VGRS) and 264 to 506 (VILE…SLHL). 46 to 53 (GENGAGKS) contributes to the ATP binding site.

Belongs to the ABC transporter superfamily. Galactose/methyl galactoside importer (TC 3.A.1.2.3) family. As to quaternary structure, the complex is composed of one ATP-binding protein (MglA), two transmembrane proteins (MglC) and a solute-binding protein (MglB).

Its subcellular location is the cell inner membrane. The catalysed reaction is D-galactose(out) + ATP + H2O = D-galactose(in) + ADP + phosphate + H(+). It catalyses the reaction methyl beta-D-galactoside(out) + ATP + H2O = methyl beta-D-galactoside(in) + ADP + phosphate + H(+). Part of the ABC transporter complex MglABC involved in galactose/methyl galactoside import. Responsible for energy coupling to the transport system. This is Galactose/methyl galactoside import ATP-binding protein MglA from Shigella boydii serotype 4 (strain Sb227).